The sequence spans 899 residues: Solute carrier family 12 member 9 (899 aa).

At 1-42 (MANEHSPLLVHGVYSMMGNAEDSRGGSAGTGEASNPKTDPRK) the chain is on the cytoplasmic side. Residues 43 to 63 (LNTFFGVMVPTILSMFSIVLF) form a helical membrane-spanning segment. Residues 64 to 78 (LRTGFVVGHAGLLHG) lie on the Extracellular side of the membrane. A helical membrane pass occupies residues 79–99 (LLMLFVAYFIISLTILSICAI). Residues 100–125 (STNGAVEGGGAYFMISRSLGPEFGGS) are Cytoplasmic-facing. Residues 126–146 (IGLMFYLAKVCACGVYVLGLV) form a helical membrane-spanning segment. Residues 147–175 (EAIMDVFGQDPGSSVAQGLRVLPQGYWYT) lie on the Extracellular side of the membrane. Residues 176–196 (VLYSSVVLLLCMLVCLVGAHI) traverse the membrane as a helical segment. Residues 197-201 (YAKAS) lie on the Cytoplasmic side of the membrane. A helical transmembrane segment spans residues 202–222 (FLILLVVTVSLISIIISPLIV). The Extracellular segment spans residues 223-269 (SPQGFNITHTYGNNHSVTVSPSYTGFNSTTLKNNLGPRYSLDYSTNT). 3 N-linked (GlcNAc...) asparagine glycosylation sites follow: N228, N236, and N249. Residues 270–290 (MMSFATVFAVMFTSCTGIMAG) traverse the membrane as a helical segment. At 291 to 306 (ANMSGELKNPSESIPK) the chain is on the cytoplasmic side. A helical transmembrane segment spans residues 307–327 (GTIMAVAYTFTVYVLLYLLLS). Residues 328 to 350 (STCDRSLLLNDYAVFQRVNVWPP) are Extracellular-facing. Residues 351–371 (FVTIGVYCASLSAAMCSMIGA) traverse the membrane as a helical segment. Over 372 to 373 (SR) the chain is Cytoplasmic. Residues 374–394 (ILHALALDQLFGLPLAPAAVT) traverse the membrane as a helical segment. At 395–399 (SSSGN) the chain is on the extracellular side. A helical membrane pass occupies residues 400 to 420 (PWVSVLYTWALVQCTLFAGQL). N421 is a topological domain (cytoplasmic). The helical transmembrane segment at 422-442 (VIAGIVTVFYLLAYAAVDLAC) threads the bilayer. Residues 443 to 455 (LALEWASAPNFRP) lie on the Extracellular side of the membrane. A helical membrane pass occupies residues 456-476 (TFQFFSWHTCLLGIISCVVMM). Residues 477–487 (FVINPVYSSAS) lie on the Extracellular side of the membrane. Residues 488–510 (IVLLLLLLLFLHYRSPTSSWGYI) traverse the membrane as a helical segment. Topologically, residues 511–563 (SQALIFHQVRKYLLMLDSRKDHVKFWRPQVLLMVSNPRSSCQLICFVNQLKKG) are cytoplasmic. Residues 564–584 (GLFVLGHVQIGDLDVLPADPV) traverse the membrane as a helical segment. Over 585 to 749 (QPQYNFWLSL…NLLTPGSASY (165 aa)) the chain is Extracellular. A helical membrane pass occupies residues 750–770 (ADVGSLFLLQMACVLNMASGW). Topologically, residues 771–899 (RRARLRIFVC…GVTPVTCTEL (129 aa)) are cytoplasmic.

Belongs to the SLC12A transporter family.

The protein localises to the cell membrane. The protein resides in the lysosome membrane. Seems to correspond to a subunit of a multimeric transport system and thus, additional subunits may be required for its function. May play a role in lysosomal ion flux and osmoregulation. The chain is Solute carrier family 12 member 9 (slc12a9) from Danio rerio (Zebrafish).